Consider the following 305-residue polypeptide: Acetylglutamate kinase (305 aa).

Substrate is bound by residues 80 to 81, arginine 102, and asparagine 196; that span reads GG.

This sequence belongs to the acetylglutamate kinase family. ArgB subfamily.

It is found in the cytoplasm. The enzyme catalyses N-acetyl-L-glutamate + ATP = N-acetyl-L-glutamyl 5-phosphate + ADP. Its pathway is amino-acid biosynthesis; L-arginine biosynthesis; N(2)-acetyl-L-ornithine from L-glutamate: step 2/4. In terms of biological role, catalyzes the ATP-dependent phosphorylation of N-acetyl-L-glutamate. This Chlorobium luteolum (strain DSM 273 / BCRC 81028 / 2530) (Pelodictyon luteolum) protein is Acetylglutamate kinase.